Here is a 107-residue protein sequence, read N- to C-terminus: Nucleoid-associated protein Atu0095 (107 aa).

Residues 81–107 (KGEAQAQEKMADLTAGLPLPPGMKLPF) form a disordered region. A compositionally biased stretch (pro residues) spans 98-107 (PLPPGMKLPF).

This sequence belongs to the YbaB/EbfC family. Homodimer.

Its subcellular location is the cytoplasm. It localises to the nucleoid. Binds to DNA and alters its conformation. May be involved in regulation of gene expression, nucleoid organization and DNA protection. The polypeptide is Nucleoid-associated protein Atu0095 (Agrobacterium fabrum (strain C58 / ATCC 33970) (Agrobacterium tumefaciens (strain C58))).